The following is a 579-amino-acid chain: Viral transcription factor IE2 (579 aa).

The span at 1-11 shows a compositional bias: basic and acidic residues; the sequence is MESSAKRKMDP. Disordered regions lie at residues 1–30 and 99–161; these read MESSAKRKMDPDNPDEGPSSKVPRPETPVT and DSSS…VIIK. Polar residues predominate over residues 99–133; it reads DSSSTGPTLTTHSCSVSSAPLNKPTPTSVAVTNTP. Glycyl lysine isopeptide (Lys-Gly) (interchain with G-Cter in SUMO) cross-links involve residues Lys175 and Lys180. Residues 199 to 202 carry the SUMO-interacting motif 1/SIM1 motif; that stretch reads CIVI. The tract at residues 200-208 is non-covalent SUMO1 binding region (SIM); the sequence is IVISDSEEE. Residues Ser203 and Ser205 each carry the phosphoserine modification. Residues 206–335 form a disordered region; it reads EEEQGEEVET…SKRISELDNE (130 aa). Composition is skewed to low complexity over residues 216 to 236, 259 to 270, and 301 to 316; these read RGATASSPSTGSGTPRVTSPT, SSSSSSCSSASD, and AASSSLLSCGHQSSGG. Residues 409 to 412 carry the SUMO-interacting motif 1/SIM2 motif; it reads IQII. An SUMO-interacting motif 1/SIM3 motif is present at residues 500–503; the sequence is VDLL.

It belongs to the HHV-5 IE2 protein family. In terms of assembly, interacts with host SUMO-modified form of TATA-binding protein (TBP)-associated factor 12/TAF12 in a SIM-dependent manner; this interaction increases the transactivation activity of IE2. Interacts with host CHAF1A. Interacts with several components of the host transcriptional machinery including TBP, TF2B and CREB1. Interacts with host DNA replication licensing factor MCM3. Interacts with host PLSCR1; this interaction inhibits IE2 transactivating activity. Phosphorylated by host CK2 at Ser-203 and Ser-205; leading to enhanced SUMOylation. Post-translationally, SUMOylated; SUMOylation is enhanced when IE2 is phosphorylated by host CK2. The sumoylation is necessary for efficient replication of the virus and thus for the function of this viral transcription factor.

It is found in the host nucleus. Functionally, stimulates viral early and late gene expression and thus play a crucial role in the regulation of productive infection. Selectively drives host RNA Pol II transcription initiation at a subset of viral early-late and late promoters without substantially affecting Pol II transcription of expressed host genes. Mechanistically, forms a repressive complex at the major immediate-early promoter region involving direct association with host nucleosomes and TBP. Concerning activation, stimulates transcription by binding nearby, but not within, core promoter regions. In addition, activates quiescent cells to reenter the cell cycle and up-regulates several E2F-responsive genes, which are responsible for pushing the cell into S phase. In S-phase, inhibits cellular DNA synthesis and blocks further cell cycle progression. In Homo sapiens (Human), this protein is Viral transcription factor IE2 (UL122).